The sequence spans 292 residues: 4-hydroxy-tetrahydrodipicolinate synthase (292 aa).

Position 45 (Thr-45) interacts with pyruvate. Residue Tyr-134 is the Proton donor/acceptor of the active site. The Schiff-base intermediate with substrate role is filled by Lys-162. Val-204 serves as a coordination point for pyruvate.

The protein belongs to the DapA family. In terms of assembly, homotetramer; dimer of dimers.

It localises to the cytoplasm. The enzyme catalyses L-aspartate 4-semialdehyde + pyruvate = (2S,4S)-4-hydroxy-2,3,4,5-tetrahydrodipicolinate + H2O + H(+). Its pathway is amino-acid biosynthesis; L-lysine biosynthesis via DAP pathway; (S)-tetrahydrodipicolinate from L-aspartate: step 3/4. Its function is as follows. Catalyzes the condensation of (S)-aspartate-beta-semialdehyde [(S)-ASA] and pyruvate to 4-hydroxy-tetrahydrodipicolinate (HTPA). This Marinobacter nauticus (strain ATCC 700491 / DSM 11845 / VT8) (Marinobacter aquaeolei) protein is 4-hydroxy-tetrahydrodipicolinate synthase.